A 518-amino-acid chain; its full sequence is uncharacterized protein (518 aa).

The next 14 membrane-spanning stretches (helical) occupy residues 13–33, 49–69, 86–106, 109–129, 141–161, 169–189, 202–222, 231–251, 280–300, 312–332, 341–361, 365–385, 410–430, and 493–513; these read WAIS…GIIS, WGSW…PIVG, CLFG…LFLI, LIQA…ILAT, LLGA…SFLL, WLFL…ACFI, AAGI…MTNL, LGNP…AALI, LIIG…PSYV, GYWM…GGAL, TVIL…LWVT, EFVI…GAPL, IGLT…FDQI, and LYAA…IPAF.

It belongs to the major facilitator superfamily. TCR/Tet family.

It localises to the cell membrane. This is an uncharacterized protein from Bacillus subtilis (strain 168).